The following is a 176-amino-acid chain: Dual-action ribosomal maturation protein DarP (176 aa).

Positions 1 to 16 (MRLIDPDADLEFDPDS) are enriched in acidic residues. Residues 1–29 (MRLIDPDADLEFDPDSVYDGPSKSQKKRE) form a disordered region.

It belongs to the DarP family.

Its subcellular location is the cytoplasm. Functionally, member of a network of 50S ribosomal subunit biogenesis factors which assembles along the 30S-50S interface, preventing incorrect 23S rRNA structures from forming. Promotes peptidyl transferase center (PTC) maturation. The polypeptide is Dual-action ribosomal maturation protein DarP (Thiobacillus denitrificans (strain ATCC 25259 / T1)).